A 462-amino-acid chain; its full sequence is Serine--tRNA ligase, cytoplasmic (462 aa).

246-248 contributes to the L-serine binding site; it reads TSE. Residues 279–281 and Val-295 each bind ATP; that span reads RRE. An L-serine-binding site is contributed by Glu-302. Residue 366–369 coordinates ATP; it reads ELVS. Residue Thr-404 coordinates L-serine.

The protein belongs to the class-II aminoacyl-tRNA synthetase family. Type-1 seryl-tRNA synthetase subfamily. As to quaternary structure, homodimer. The tRNA molecule binds across the dimer.

It is found in the cytoplasm. The protein resides in the cytosol. It catalyses the reaction tRNA(Ser) + L-serine + ATP = L-seryl-tRNA(Ser) + AMP + diphosphate + H(+). Catalyzes the attachment of serine to tRNA(Ser) in a two-step reaction: serine is first activated by ATP to form Ser-AMP and then transferred to the acceptor end of tRNA(Ser). This chain is Serine--tRNA ligase, cytoplasmic (SES1), found in Candida albicans (strain SC5314 / ATCC MYA-2876) (Yeast).